The sequence spans 311 residues: HPr kinase/phosphorylase (311 aa).

Residues H138 and K159 contribute to the active site. 153 to 160 lines the ATP pocket; that stretch reads GDSGIGKS. Position 160 (S160) interacts with Mg(2+). D177 serves as the catalytic Proton acceptor; for phosphorylation activity. Proton donor; for dephosphorylation activity. Residues 201–210 form an important for the catalytic mechanism of both phosphorylation and dephosphorylation region; the sequence is IEIRGVGIID. E202 is a Mg(2+) binding site. R243 is an active-site residue. Residues 264–269 are important for the catalytic mechanism of dephosphorylation; that stretch reads PVKTGR.

The protein belongs to the HPrK/P family. In terms of assembly, homohexamer. It depends on Mg(2+) as a cofactor.

It carries out the reaction [HPr protein]-L-serine + ATP = [HPr protein]-O-phospho-L-serine + ADP + H(+). The catalysed reaction is [HPr protein]-O-phospho-L-serine + phosphate + H(+) = [HPr protein]-L-serine + diphosphate. Its function is as follows. Catalyzes the ATP- as well as the pyrophosphate-dependent phosphorylation of a specific serine residue in HPr, a phosphocarrier protein of the phosphoenolpyruvate-dependent sugar phosphotransferase system (PTS). HprK/P also catalyzes the pyrophosphate-producing, inorganic phosphate-dependent dephosphorylation (phosphorolysis) of seryl-phosphorylated HPr (P-Ser-HPr). The two antagonistic activities of HprK/P are regulated by several intracellular metabolites, which change their concentration in response to the absence or presence of rapidly metabolisable carbon sources (glucose, fructose, etc.) in the growth medium. Therefore, by controlling the phosphorylation state of HPr, HPrK/P is a sensor enzyme that plays a major role in the regulation of carbon metabolism and sugar transport: it mediates carbon catabolite repression (CCR), and regulates PTS-catalyzed carbohydrate uptake and inducer exclusion. This is HPr kinase/phosphorylase from Streptococcus pneumoniae serotype 2 (strain D39 / NCTC 7466).